We begin with the raw amino-acid sequence, 363 residues long: S-adenosylmethionine:tRNA ribosyltransferase-isomerase (363 aa).

The protein belongs to the QueA family. Monomer.

It localises to the cytoplasm. It catalyses the reaction 7-aminomethyl-7-carbaguanosine(34) in tRNA + S-adenosyl-L-methionine = epoxyqueuosine(34) in tRNA + adenine + L-methionine + 2 H(+). It functions in the pathway tRNA modification; tRNA-queuosine biosynthesis. Functionally, transfers and isomerizes the ribose moiety from AdoMet to the 7-aminomethyl group of 7-deazaguanine (preQ1-tRNA) to give epoxyqueuosine (oQ-tRNA). This is S-adenosylmethionine:tRNA ribosyltransferase-isomerase from Synechococcus sp. (strain RCC307).